Consider the following 103-residue polypeptide: Large ribosomal subunit protein bL21 (103 aa).

This sequence belongs to the bacterial ribosomal protein bL21 family. As to quaternary structure, part of the 50S ribosomal subunit. Contacts protein L20.

In terms of biological role, this protein binds to 23S rRNA in the presence of protein L20. This Hamiltonella defensa subsp. Acyrthosiphon pisum (strain 5AT) protein is Large ribosomal subunit protein bL21.